Here is a 585-residue protein sequence, read N- to C-terminus: Protein DENND6B (585 aa).

A uDENN domain is found at 43–214 (ECVCVVTFDL…LPVMGVVVQV (172 aa)). Residues 246-373 (VHELDLFRCF…VKLKKPSRLK (128 aa)) enclose the cDENN domain. The dDENN domain maps to 375 to 499 (LDTKPGLYTA…KSPHFDGWYR (125 aa)).

It belongs to the DENND6 family.

The protein localises to the recycling endosome. The protein resides in the cytoplasm. Its function is as follows. Guanine nucleotide exchange factor (GEF) for RAB14. Also has some, lesser GEF activity towards RAB35. This chain is Protein DENND6B (DENND6B), found in Homo sapiens (Human).